The chain runs to 121 residues: NADPH-dependent 7-cyano-7-deazaguanine reductase (121 aa).

Catalysis depends on cysteine 36, which acts as the Thioimide intermediate. Aspartate 43 (proton donor) is an active-site residue. Substrate is bound by residues 58–60 (VEL) and 77–78 (YE).

It belongs to the GTP cyclohydrolase I family. QueF type 1 subfamily.

It localises to the cytoplasm. It catalyses the reaction 7-aminomethyl-7-carbaguanine + 2 NADP(+) = 7-cyano-7-deazaguanine + 2 NADPH + 3 H(+). It functions in the pathway tRNA modification; tRNA-queuosine biosynthesis. Its function is as follows. Catalyzes the NADPH-dependent reduction of 7-cyano-7-deazaguanine (preQ0) to 7-aminomethyl-7-deazaguanine (preQ1). The protein is NADPH-dependent 7-cyano-7-deazaguanine reductase of Rhodopirellula baltica (strain DSM 10527 / NCIMB 13988 / SH1).